Consider the following 95-residue polypeptide: Aspartyl/glutamyl-tRNA(Asn/Gln) amidotransferase subunit C (95 aa).

This sequence belongs to the GatC family. As to quaternary structure, heterotrimer of A, B and C subunits.

It carries out the reaction L-glutamyl-tRNA(Gln) + L-glutamine + ATP + H2O = L-glutaminyl-tRNA(Gln) + L-glutamate + ADP + phosphate + H(+). The enzyme catalyses L-aspartyl-tRNA(Asn) + L-glutamine + ATP + H2O = L-asparaginyl-tRNA(Asn) + L-glutamate + ADP + phosphate + 2 H(+). Functionally, allows the formation of correctly charged Asn-tRNA(Asn) or Gln-tRNA(Gln) through the transamidation of misacylated Asp-tRNA(Asn) or Glu-tRNA(Gln) in organisms which lack either or both of asparaginyl-tRNA or glutaminyl-tRNA synthetases. The reaction takes place in the presence of glutamine and ATP through an activated phospho-Asp-tRNA(Asn) or phospho-Glu-tRNA(Gln). The sequence is that of Aspartyl/glutamyl-tRNA(Asn/Gln) amidotransferase subunit C from Sinorhizobium fredii (strain NBRC 101917 / NGR234).